The following is a 446-amino-acid chain: ATP-dependent protease ATPase subunit HslU (446 aa).

ATP contacts are provided by residues V18, G60–E65, D259, E324, and R396.

Belongs to the ClpX chaperone family. HslU subfamily. As to quaternary structure, a double ring-shaped homohexamer of HslV is capped on each side by a ring-shaped HslU homohexamer. The assembly of the HslU/HslV complex is dependent on binding of ATP.

The protein localises to the cytoplasm. In terms of biological role, ATPase subunit of a proteasome-like degradation complex; this subunit has chaperone activity. The binding of ATP and its subsequent hydrolysis by HslU are essential for unfolding of protein substrates subsequently hydrolyzed by HslV. HslU recognizes the N-terminal part of its protein substrates and unfolds these before they are guided to HslV for hydrolysis. In Acidovorax sp. (strain JS42), this protein is ATP-dependent protease ATPase subunit HslU.